A 100-amino-acid polypeptide reads, in one-letter code: Urease subunit gamma (100 aa).

Belongs to the urease gamma subunit family. As to quaternary structure, heterotrimer of UreA (gamma), UreB (beta) and UreC (alpha) subunits. Three heterotrimers associate to form the active enzyme.

Its subcellular location is the cytoplasm. The catalysed reaction is urea + 2 H2O + H(+) = hydrogencarbonate + 2 NH4(+). Its pathway is nitrogen metabolism; urea degradation; CO(2) and NH(3) from urea (urease route): step 1/1. The protein is Urease subunit gamma of Cereibacter sphaeroides (strain ATCC 17025 / ATH 2.4.3) (Rhodobacter sphaeroides).